A 353-amino-acid polypeptide reads, in one-letter code: UPF0283 membrane protein YcjF (353 aa).

The segment covering 1 to 19 (MSEPLKPRIDFAEPLKEEP) has biased composition (basic and acidic residues). The disordered stretch occupies residues 1-35 (MSEPLKPRIDFAEPLKEEPTSAFKAQQTFSEAESR). Residues 1–69 (MSEPLKPRID…LRPKRSLWRK (69 aa)) are Periplasmic-facing. A helical membrane pass occupies residues 70 to 90 (MVMGGLALFGASVVGQGVQWT). Residues 91-99 (MNAWQTQDW) lie on the Cytoplasmic side of the membrane. Residues 100-120 (VALGGCAAGALIVGAGVGSVV) traverse the membrane as a helical segment. Over 121-212 (TEWRRLWRLR…ARREISRFAA (92 aa)) the chain is Periplasmic. A helical transmembrane segment spans residues 213 to 233 (ESTLMIAVSPLALVDMAFIAW). Over 234-353 (RNLRLINRIA…LQKSKSSPEK (120 aa)) the chain is Cytoplasmic.

It belongs to the UPF0283 family.

It is found in the cell inner membrane. The protein is UPF0283 membrane protein YcjF (ycjF) of Salmonella typhimurium (strain LT2 / SGSC1412 / ATCC 700720).